The primary structure comprises 282 residues: Aquaporin PIP2-7 (282 aa).

A disordered region spans residues 1-21 (MSKEVSVEGEQPPVKDYTDPP). Residues 1-38 (MSKEVSVEGEQPPVKDYTDPPPEPLLNFGELRLWSFYR) lie on the Cytoplasmic side of the membrane. Residues 39 to 59 (ALIAEFVATLLFLYVTIATVI) traverse the membrane as a helical segment. Topologically, residues 60–71 (GHKEQNAADQCS) are extracellular. Residues 72 to 92 (GVGLLGIAWAFGGMIFILVYC) traverse the membrane as a helical segment. The Cytoplasmic segment spans residues 93-120 (TAGISGGHINPAVTLGLFLARKVSLIRA). Residues 102–104 (NPA) carry the NPA 1 motif. Residues 121 to 141 (LLYMVAQCLGAIVGVGIVKGI) traverse the membrane as a helical segment. Over 142 to 162 (MKHQYNSLGGGANVVAAGYSK) the chain is Extracellular. A helical membrane pass occupies residues 163–183 (GTALGAEIIGTFVLVYTVFSA). The Cytoplasmic segment spans residues 184-196 (TDPKRSARDSHVP). The helical transmembrane segment at 197–217 (VLAPLPIGFAVFMVHLATIPI) threads the bilayer. Residues 218 to 244 (TGTGINPARSLGAAVIYNQDKPWDDHW) lie on the Extracellular side of the membrane. Positions 223–225 (NPA) match the NPA 2 motif. Residues 245-265 (ILWVGPFVGALAAAAYHQYIL) traverse the membrane as a helical segment. Topologically, residues 266 to 282 (RAAAIKALGSFRSNPSN) are cytoplasmic.

It belongs to the MIP/aquaporin (TC 1.A.8) family. PIP (TC 1.A.8.11) subfamily. Expressed in roots, leaves and fruits.

The protein resides in the cell membrane. Functionally, water channel required to facilitate the transport of water across cell membrane; mercury-insensitive. Contributes to the tolerance to multiple abiotic stresses including salt (NaCl), cold and water deprivation, by modulating cytosolic K(+)/Na(+) ratio, maintaining osmotic balance, and reducing membrane injury (e.g. oxidative injury). Also regulates the expression of abscisic acid (ABA)- biosynthetic and -responsive genes during dehydration and salt stresses. In Musa acuminata (Banana), this protein is Aquaporin PIP2-7.